A 406-amino-acid polypeptide reads, in one-letter code: DNA-binding transcriptional repressor Mlc (406 aa).

Residues 33–42 (RIDLSRLAQL) constitute a DNA-binding region (H-T-H motif). Zn(2+) contacts are provided by H247, C257, C259, and C264.

Belongs to the ROK (NagC/XylR) family. As to quaternary structure, homodimer. Homotetramer. There is probably an equilibrium between the dimeric and the tetrameric form. Interacts with dephosphorylated PtsG. Mlc and PtsG EIIB domain form a complex with the 1:1 stoichiometry. Interacts with MtfA.

The protein localises to the cytoplasm. Activity is modulated by glucose. In the presence of glucose, is inhibited by interaction with the dephosphorylated form of PtsG, which sequesters Mlc in the inner membrane and prevents Mlc binding to its target promoters. The restriction of conformational freedom resulting from the anchoring of four ends of Mlc to the membrane could be the primary cause of its loss of DNA-binding activity in vivo. Activity is also inhibited by interaction with the Mlc titration factor A (mtfA). The inactivation mechanisms of Mlc by dephosphorylated PtsG and MtfA differ significantly. Its function is as follows. Global regulator of carbohydrate metabolism. Represses the expression of several genes involved in sugar transport and utilization, in particular phosphoenolpyruvate-carbohydrate phosphotransferase system (PTS) genes. Represses expression of ptsG (EIICB(Glc)), which encodes the PTS system glucose-specific EIICB component. Also represses the expression of the manXYZ operon, encoding the mannose-specific PTS system, expression of malT, encoding the transcriptional activator of the maltose regulon, and expression of the pts operon, composed of the genes ptsH, ptsI and crr. Represses its own expression. Acts by binding to the regulatory region of the target genes. This chain is DNA-binding transcriptional repressor Mlc, found in Escherichia coli (strain K12).